The following is a 305-amino-acid chain: Phosphatidate cytidylyltransferase (305 aa).

8 consecutive transmembrane segments (helical) span residues Phe27–Leu47, Phe67–Cys87, Phe96–Val116, Leu124–Ile144, Ile150–Leu170, Thr202–Ser222, Ile232–Gly252, and Met277–Ile297.

It belongs to the CDS family.

It localises to the cell membrane. The catalysed reaction is a 1,2-diacyl-sn-glycero-3-phosphate + CTP + H(+) = a CDP-1,2-diacyl-sn-glycerol + diphosphate. It functions in the pathway phospholipid metabolism; CDP-diacylglycerol biosynthesis; CDP-diacylglycerol from sn-glycerol 3-phosphate: step 3/3. The protein is Phosphatidate cytidylyltransferase (cdsA) of Chlamydia trachomatis serovar D (strain ATCC VR-885 / DSM 19411 / UW-3/Cx).